Here is a 308-residue protein sequence, read N- to C-terminus: D-alanine--D-alanine ligase B (308 aa).

The region spanning 102-302 (KKVAAAAGVV…FAELLSWMVE (201 aa)) is the ATP-grasp domain. 128–183 (PMKPPYVVKPVREGSSFGVVIVKEDQPHPPQVIGSADWKYGDEVMVEGYIAGRELT) is a binding site for ATP. Mg(2+) is bound by residues aspartate 252, glutamate 269, and asparagine 271.

It belongs to the D-alanine--D-alanine ligase family. The cofactor is Mg(2+). It depends on Mn(2+) as a cofactor.

The protein resides in the cytoplasm. The catalysed reaction is 2 D-alanine + ATP = D-alanyl-D-alanine + ADP + phosphate + H(+). It participates in cell wall biogenesis; peptidoglycan biosynthesis. Its function is as follows. Cell wall formation. The sequence is that of D-alanine--D-alanine ligase B from Brucella suis biovar 1 (strain 1330).